Reading from the N-terminus, the 290-residue chain is Elongation factor Ts, mitochondrial 1 (290 aa).

The protein belongs to the EF-Ts family.

It is found in the mitochondrion. Functionally, associates with the EF-Tu.GDP complex and induces the exchange of GDP to GTP. It remains bound to the aminoacyl-tRNA.EF-Tu.GTP complex up to the GTP hydrolysis stage on the ribosome. The chain is Elongation factor Ts, mitochondrial 1 from Postia placenta (strain ATCC 44394 / Madison 698-R) (Brown rot fungus).